The chain runs to 418 residues: Actin-related protein 3 (418 aa).

This sequence belongs to the actin family. ARP3 subfamily. Component of the Arp2/3 complex.

It is found in the cytoplasm. Its subcellular location is the cytoskeleton. Its function is as follows. Functions as ATP-binding component of the Arp2/3 complex which is involved in regulation of actin polymerization and together with an activating nucleation-promoting factor (NPF) mediates the formation of branched actin networks. Seems to contact the pointed end of the daughter actin filament. Required during embryogenesis for the developmental migration of tail hemocytes anteriorly, along the ventral midline. The polypeptide is Actin-related protein 3 (Drosophila melanogaster (Fruit fly)).